The sequence spans 86 residues: Putative defensin-like protein 211 (86 aa).

The signal sequence occupies residues 1 to 19 (MNTIVLFLTLLILVSSCTS). 3 disulfide bridges follow: Cys55–Cys72, Cys58–Cys77, and Cys62–Cys79.

Belongs to the DEFL family.

Its subcellular location is the secreted. The polypeptide is Putative defensin-like protein 211 (Arabidopsis thaliana (Mouse-ear cress)).